The chain runs to 315 residues: Protoheme IX farnesyltransferase (315 aa).

9 helical membrane passes run 32-52 (VMSLVVFTGLVGLVLAPGHMN), 53-73 (PVLAVISILCIAVGAGASGAL), 93-113 (IPAGIIAPNQVLAFGLTLSAF), 120-140 (LMVNWLAAALLAFTIFFYAVI), 153-173 (IVIGGAAGAFPPMIGWAAATG), 180-200 (LVLFMIIFLWTPPHFWALSLF), 226-246 (ALFYAVLMAPVGVLPWVMGFA), 249-269 (FYGVVSTLLGLAFVYYAWRLW), and 295-315 (IFAVLLFEALTFKLLAAFGVF).

The protein belongs to the UbiA prenyltransferase family. Protoheme IX farnesyltransferase subfamily.

It is found in the cell inner membrane. The enzyme catalyses heme b + (2E,6E)-farnesyl diphosphate + H2O = Fe(II)-heme o + diphosphate. Its pathway is porphyrin-containing compound metabolism; heme O biosynthesis; heme O from protoheme: step 1/1. In terms of biological role, converts heme B (protoheme IX) to heme O by substitution of the vinyl group on carbon 2 of heme B porphyrin ring with a hydroxyethyl farnesyl side group. This Brucella canis (strain ATCC 23365 / NCTC 10854 / RM-666) protein is Protoheme IX farnesyltransferase.